The following is an 896-amino-acid chain: Translation initiation factor IF-2 (896 aa).

The tract at residues 46-315 is disordered; the sequence is LAHLNRQHGG…FNKPAQPVER (270 aa). Residues 99–247 show a composition bias toward basic and acidic residues; sequence SASEEQEREE…RKQQEKEDVH (149 aa). Basic residues predominate over residues 269-278; it reads SRKRGKKRRR. Basic and acidic residues predominate over residues 279–288; the sequence is KDEESDDTPR. In terms of domain architecture, tr-type G spans 396–565; it reads PRAPVVTVMG…LLQSEVLDLR (170 aa). Residues 405–412 are G1; that stretch reads GHVDHGKT. Residue 405 to 412 participates in GTP binding; that stretch reads GHVDHGKT. Positions 430–434 are G2; sequence GITQH. Positions 451 to 454 are G3; it reads DTPG. GTP is bound by residues 451 to 455 and 505 to 508; these read DTPGH and NKMD. The G4 stretch occupies residues 505–508; sequence NKMD. Residues 541 to 543 form a G5 region; sequence SAH.

This sequence belongs to the TRAFAC class translation factor GTPase superfamily. Classic translation factor GTPase family. IF-2 subfamily.

It is found in the cytoplasm. Functionally, one of the essential components for the initiation of protein synthesis. Protects formylmethionyl-tRNA from spontaneous hydrolysis and promotes its binding to the 30S ribosomal subunits. Also involved in the hydrolysis of GTP during the formation of the 70S ribosomal complex. This is Translation initiation factor IF-2 from Idiomarina loihiensis (strain ATCC BAA-735 / DSM 15497 / L2-TR).